Here is a 607-residue protein sequence, read N- to C-terminus: Major facilitator superfamily multidrug transporter mdrA (607 aa).

12 helical membrane-spanning segments follow: residues 77-97 (MTVAVSTLAVALVSSAYTGGV), 110-130 (VATLGVSLFVLGFAIGPLLWA), 139-159 (QIIFTVTYCALTAFNAGSAGA), 170-190 (FFAGAFGASPLTNAGGVIADM), 202-222 (LFAAAPFLGPVLGPIIGGFLG), 229-249 (WVMGFLGAFSGAVWIICTIFV), 305-325 (PIVFLLSLYMAIIYGTLYMLF), 342-362 (VSSLPFLGIMVGMMFAVTYSV), 385-405 (LPPTLIASVAIPIGLFWFAWT), 413-433 (IVCILAGAPFGFGMVLVFLGI), 443-463 (IFAASVLAANSVLRSIFGAVF), and 478-498 (WASSIPAFLALACVPFPFLFY). Residues 523-583 (EQMKQAPEPE…ASTRTASSLR (61 aa)) are disordered. Residues 553–564 (DVSETESNVEEL) show a composition bias toward acidic residues. Residues 572 to 583 (SRASTRTASSLR) show a composition bias toward low complexity.

It belongs to the major facilitator superfamily. DHA1 family. Polyamines/proton antiporter (TC 2.A.1.2.16) subfamily.

Its subcellular location is the cell membrane. Functionally, MFS transporter involved in the basal level of azole susceptibility. Confers resistance to voriconazole and, to a lesser extent, to fluconazole. This is Major facilitator superfamily multidrug transporter mdrA from Aspergillus fumigatus (strain ATCC MYA-4609 / CBS 101355 / FGSC A1100 / Af293) (Neosartorya fumigata).